The sequence spans 283 residues: MSPPVYSDISRNINDLLNKDFYHATPAAFDVQTTTANGIKFSLKAKQPVKDGPLSTNVEAKLNDKQTGLGLTQGWSNTNNLQTKLEFANLTPGLKNELITSLTPGVAKSAVLNTTFTQPFFTARGAFDLCLKSPTFVGDLTMAHEGIVGGAEFGYDISAGSISRYAMALSYFAKDYSLGATLNNEQITTVDFFQNVNAFLQVGAKATMNCKLPNSNVNIEFATRYLPDASSQVKAKVSDSGIVTLAYKQLLRPGVTLGVGSSFDALKLSEPVHKLGWSLSFDA.

ATP-binding residues include arginine 11 and lysine 19. Position 109 is a phosphoserine (serine 109). Position 117 is a phosphothreonine (threonine 117).

The protein belongs to the eukaryotic mitochondrial porin family. As to quaternary structure, homodimer. Interacts with FCJ1. Interacts with AIM5. Interacts.

It localises to the mitochondrion outer membrane. In terms of biological role, non-selective voltage-gated ion channel that mediates the transport of anions and cations through the mitochondrion outer membrane. The channel adopts an open conformation at low or zero membrane potential and a closed conformation at potentials above 30-40 mV. The open state has a weak anion selectivity whereas the closed state is cation-selective. Is the major permeability factor of the mitochondrial outer membrane. Catalyzes the scrambling of phospholipids across the outer mitochondrial membrane; the mechanism is unrelated to channel activity and is capable of translocating both anionic and zwitterionic phospholipids. This Saccharomyces cerevisiae (strain ATCC 204508 / S288c) (Baker's yeast) protein is Non-selective voltage-gated ion channel 1 (POR1).